We begin with the raw amino-acid sequence, 282 residues long: Pantothenate synthetase (282 aa).

30–37 (MGYLHEGH) contacts ATP. H37 serves as the catalytic Proton donor. Residue Q61 participates in (R)-pantoate binding. Q61 contributes to the beta-alanine binding site. Position 147–150 (147–150 (GMKD)) interacts with ATP. Position 153 (Q153) interacts with (R)-pantoate. ATP contacts are provided by residues V176 and 184–187 (KSSR).

The protein belongs to the pantothenate synthetase family. As to quaternary structure, homodimer.

It localises to the cytoplasm. It catalyses the reaction (R)-pantoate + beta-alanine + ATP = (R)-pantothenate + AMP + diphosphate + H(+). It participates in cofactor biosynthesis; (R)-pantothenate biosynthesis; (R)-pantothenate from (R)-pantoate and beta-alanine: step 1/1. Its function is as follows. Catalyzes the condensation of pantoate with beta-alanine in an ATP-dependent reaction via a pantoyl-adenylate intermediate. The chain is Pantothenate synthetase from Geobacillus sp. (strain WCH70).